Reading from the N-terminus, the 260-residue chain is tRNA (guanine-N(1)-)-methyltransferase (260 aa).

S-adenosyl-L-methionine contacts are provided by residues Gly117 and 137 to 142 (LGDFVL).

This sequence belongs to the RNA methyltransferase TrmD family. As to quaternary structure, homodimer.

The protein localises to the cytoplasm. It catalyses the reaction guanosine(37) in tRNA + S-adenosyl-L-methionine = N(1)-methylguanosine(37) in tRNA + S-adenosyl-L-homocysteine + H(+). Its function is as follows. Specifically methylates guanosine-37 in various tRNAs. The sequence is that of tRNA (guanine-N(1)-)-methyltransferase from Cupriavidus taiwanensis (strain DSM 17343 / BCRC 17206 / CCUG 44338 / CIP 107171 / LMG 19424 / R1) (Ralstonia taiwanensis (strain LMG 19424)).